A 251-amino-acid polypeptide reads, in one-letter code: HTH-type transcriptional regulator UlaR (251 aa).

The HTH deoR-type domain occupies 3–58 (EAQRHQILLEMLAQLGFVTVEKVVERLGISPATARRDINKLGESGKLKKVRNGAEA). Positions 20–39 (VTVEKVVERLGISPATARRD) form a DNA-binding region, H-T-H motif.

The protein localises to the cytoplasm. In terms of biological role, represses ulaG and the ulaABCDEF operon. The chain is HTH-type transcriptional regulator UlaR from Shigella flexneri.